Reading from the N-terminus, the 278-residue chain is Protein FixR (278 aa).

40 to 64 provides a ligand contact to NAD(+); it reads LLTGASRGIGHATAKLFSEAGWRII. A substrate-binding site is contributed by S175. The Proton acceptor role is filled by Y189.

It belongs to the short-chain dehydrogenases/reductases (SDR) family.

This Bradyrhizobium diazoefficiens (strain JCM 10833 / BCRC 13528 / IAM 13628 / NBRC 14792 / USDA 110) protein is Protein FixR (fixR).